A 256-amino-acid polypeptide reads, in one-letter code: Rano class II histocompatibility antigen, B alpha chain (256 aa).

The first 23 residues, Met-1–Gly-23, serve as a signal peptide directing secretion. Residues Gln-24–Asn-111 form an alpha-1 region. Topologically, residues Gln-24–Glu-218 are extracellular. The Ig-like C1-type domain maps to Pro-108 to Glu-206. Residues Glu-112 to Trp-205 form an alpha-2 region. A disulfide bridge connects residues Cys-134 and Cys-190. A glycan (N-linked (GlcNAc...) asparagine) is linked at Asn-145. The connecting peptide stretch occupies residues Glu-206 to Glu-218. A helical membrane pass occupies residues Thr-219–Leu-244. Over Arg-245–Leu-256 the chain is Cytoplasmic.

It belongs to the MHC class II family.

The protein localises to the membrane. The polypeptide is Rano class II histocompatibility antigen, B alpha chain (RT1-Ba) (Rattus norvegicus (Rat)).